A 585-amino-acid chain; its full sequence is Staphyloferrin A synthase (585 aa).

Belongs to the IucA/IucC family.

The enzyme catalyses N(5)-[(S)-citryl]-D-ornithine + citrate + ATP = staphyloferrin A + AMP + diphosphate + H(+). Its pathway is siderophore biosynthesis. Involved in the biosynthesis of the siderophore staphyloferrin A. Catalyzes the ATP-dependent condensation of a citryl-D-ornithine intermediate, produced by SfnaD, and citrate to form staphyloferrin A. This is Staphyloferrin A synthase from Staphylococcus aureus (strain NCTC 8325 / PS 47).